The sequence spans 1020 residues: C2 and GRAM domain-containing protein At1g03370 (1020 aa).

In terms of domain architecture, C2 1 spans 1–102 (MKLQVRVVEA…ENQSLGTVWY (102 aa)). 5 residues coordinate Ca(2+): D17, D23, D69, D71, and D77. Composition is skewed to polar residues over residues 134–144 (TSSGDQTSASR) and 158–172 (TCAS…SSIP). A disordered region spans residues 134–172 (TSSGDQTSASRSPDLRLESPIDPSTCASPSRSDDASSIP). The 173-residue stretch at 249 to 421 (SGGVVVDQLF…LLAQSVKPVD (173 aa)) folds into the VASt 1 domain. The chain crosses the membrane as a helical span at residues 454–474 (FTVLSTFLIGIYVFVHIVFAI). In terms of domain architecture, C2 2 spans 517-635 (QARKQKGSDH…NISDLADVWV (119 aa)). Residues D551, D557, D604, F605, and D606 each coordinate Ca(2+). Residues 689–752 (AFQKLFGLPQ…LWEDIEEIQV (64 aa)) enclose the GRAM domain. A VASt 2 domain is found at 848 to 1010 (RFSEVFSLTL…MTFGFLEKEY (163 aa)).

It depends on Ca(2+) as a cofactor.

It localises to the membrane. The sequence is that of C2 and GRAM domain-containing protein At1g03370 from Arabidopsis thaliana (Mouse-ear cress).